A 344-amino-acid polypeptide reads, in one-letter code: Anthranilate phosphoribosyltransferase (344 aa).

5-phospho-alpha-D-ribose 1-diphosphate is bound by residues glycine 79, 82–83 (GD), threonine 87, 89–92 (NIST), 107–115 (KHGNRSVSS), and serine 119. An anthranilate-binding site is contributed by glycine 79. Serine 91 is a binding site for Mg(2+). Asparagine 110 serves as a coordination point for anthranilate. Arginine 165 contributes to the anthranilate binding site. Residues aspartate 224 and glutamate 225 each contribute to the Mg(2+) site.

This sequence belongs to the anthranilate phosphoribosyltransferase family. In terms of assembly, homodimer. The cofactor is Mg(2+).

The enzyme catalyses N-(5-phospho-beta-D-ribosyl)anthranilate + diphosphate = 5-phospho-alpha-D-ribose 1-diphosphate + anthranilate. It functions in the pathway amino-acid biosynthesis; L-tryptophan biosynthesis; L-tryptophan from chorismate: step 2/5. Its function is as follows. Catalyzes the transfer of the phosphoribosyl group of 5-phosphorylribose-1-pyrophosphate (PRPP) to anthranilate to yield N-(5'-phosphoribosyl)-anthranilate (PRA). This chain is Anthranilate phosphoribosyltransferase, found in Salinibacter ruber (strain DSM 13855 / M31).